The sequence spans 363 residues: Putative type I specificity subunit S.MpnORF507P (363 aa).

Belongs to the type-I restriction system S methylase family. In terms of assembly, the methyltransferase is composed of M and S polypeptides.

The specificity (S) subunit of a type I methyltransferase (MTase); this subunit dictates DNA sequence specificity. The single R subunit has multiple frameshifts and is probably not expressed. This chain is Putative type I specificity subunit S.MpnORF507P, found in Mycoplasma pneumoniae (strain ATCC 29342 / M129 / Subtype 1) (Mycoplasmoides pneumoniae).